We begin with the raw amino-acid sequence, 402 residues long: Olfactomedin-like protein 1 (402 aa).

The signal sequence occupies residues 1–28 (MMVALPGASASLVLFLAAFLPPLQHAQD). N-linked (GlcNAc...) asparagine glycosylation is present at asparagine 66. The stretch at 73 to 135 (RCQTHTNEYR…EAEEEKKIRT (63 aa)) forms a coiled coil. 2 N-linked (GlcNAc...) asparagine glycosylation sites follow: asparagine 138 and asparagine 183. The 258-residue stretch at 140-397 (SCDNMLMAIK…QIIYKLQTKK (258 aa)) folds into the Olfactomedin-like domain. Cysteine 141 and cysteine 324 are oxidised to a cystine.

Highly N-glycosylated.

The protein resides in the secreted. The protein is Olfactomedin-like protein 1 (Olfml1) of Rattus norvegicus (Rat).